The sequence spans 918 residues: Probable UDP-N-acetylglucosamine--peptide N-acetylglucosaminyltransferase SPINDLY (918 aa).

11 TPR repeats span residues 34–66 (GKEA…SKNV), 67–99 (EAHI…DPHN), 101–132 (CALT…DPSY), 140–171 (ATVL…DPHY), 172–205 (APAC…SPTY), 207–238 (DAYC…NNMG), 239–271 (IALT…NWHY), 273–305 (DAMY…NPHC), 306–339 (AEAC…KPNF), 341–373 (QSLN…NPTY), and 374–407 (AEAY…DPDS). Positions 408–918 (RNAGQNRLLA…LNCGDQCFRV (511 aa)) are catalytic region. The segment covering 843 to 853 (QLHQQPNTSPQ) has biased composition (polar residues). The interval 843-877 (QLHQQPNTSPQKLVKDEPADDASGPEHGPASKDNP) is disordered.

Belongs to the glycosyltransferase 41 family. O-GlcNAc transferase subfamily.

It is found in the nucleus. It carries out the reaction L-seryl-[protein] + UDP-N-acetyl-alpha-D-glucosamine = 3-O-(N-acetyl-beta-D-glucosaminyl)-L-seryl-[protein] + UDP + H(+). The catalysed reaction is L-threonyl-[protein] + UDP-N-acetyl-alpha-D-glucosamine = 3-O-(N-acetyl-beta-D-glucosaminyl)-L-threonyl-[protein] + UDP + H(+). It participates in protein modification; protein glycosylation. Functionally, probable O-linked N-acetylglucosamine transferase (OGT) involved in various processes such as gibberellin (GA) signaling pathway. OGTs catalyze the addition of nucleotide-activated sugars directly onto the polypeptide through O-glycosidic linkage with the hydroxyl of serine or threonine. Probably acts by adding O-linked sugars to yet unknown proteins. May function as a negative regulator of GA signal transduction during vernalization, inhibiting adventitious shoot elongation during vernalization. The protein is Probable UDP-N-acetylglucosamine--peptide N-acetylglucosaminyltransferase SPINDLY (SPY) of Eustoma exaltatum subsp. russellianum (Bluebells).